A 450-amino-acid chain; its full sequence is Sulfide:quinone oxidoreductase, mitochondrial (450 aa).

FAD-binding positions include 53–54, E75, Q83, and V118; that span reads SG. The residue at position 173 (K173) is an N6-acetyllysine. The active-site Cysteine persulfide intermediate is the C201. C201 and C379 are joined by a disulfide. Position 336 (D336) interacts with FAD. S343 is modified (phosphoserine). FAD is bound at residue 344-347; it reads KTAA. The Cysteine persulfide intermediate role is filled by C379.

It belongs to the SQRD family. It depends on FAD as a cofactor.

It localises to the mitochondrion. It catalyses the reaction ubiquinone-10 + hydrogen sulfide + sulfite + 2 H(+) = ubiquinol-10 + thiosulfate. The enzyme catalyses a quinone + hydrogen sulfide + glutathione + H(+) = S-sulfanylglutathione + a quinol. It carries out the reaction ubiquinone-10 + hydrogen sulfide + glutathione + H(+) = S-sulfanylglutathione + ubiquinol-10. Catalyzes the oxidation of hydrogen sulfide with the help of a quinone, such as ubiquinone-10, giving rise to thiosulfate and ultimately to sulfane (molecular sulfur) atoms. Requires an additional electron acceptor; can use sulfite, sulfide or cyanide (in vitro). It is believed the in vivo electron acceptor is glutathione. This Homo sapiens (Human) protein is Sulfide:quinone oxidoreductase, mitochondrial.